Here is a 421-residue protein sequence, read N- to C-terminus: 4-hydroxy-3-methylbut-2-en-1-yl diphosphate synthase (flavodoxin) (421 aa).

[4Fe-4S] cluster-binding residues include Cys-311, Cys-314, Cys-357, and Glu-364.

This sequence belongs to the IspG family. The cofactor is [4Fe-4S] cluster.

The catalysed reaction is (2E)-4-hydroxy-3-methylbut-2-enyl diphosphate + oxidized [flavodoxin] + H2O + 2 H(+) = 2-C-methyl-D-erythritol 2,4-cyclic diphosphate + reduced [flavodoxin]. The protein operates within isoprenoid biosynthesis; isopentenyl diphosphate biosynthesis via DXP pathway; isopentenyl diphosphate from 1-deoxy-D-xylulose 5-phosphate: step 5/6. In terms of biological role, converts 2C-methyl-D-erythritol 2,4-cyclodiphosphate (ME-2,4cPP) into 1-hydroxy-2-methyl-2-(E)-butenyl 4-diphosphate. The polypeptide is 4-hydroxy-3-methylbut-2-en-1-yl diphosphate synthase (flavodoxin) (Xanthomonas oryzae pv. oryzae (strain KACC10331 / KXO85)).